Reading from the N-terminus, the 118-residue chain is MTANTLKRKISLRIKRKRKIRANISGSAVCPRISIFKSNRTIYAQAIDDTNSKTLCASSGTALKIKANKDGAAILAKDFAEKLKAAKISEAIFDRNGYLYHGVVAAFADALRKNGIKL.

It belongs to the universal ribosomal protein uL18 family. Part of the 50S ribosomal subunit; part of the 5S rRNA/L5/L18/L25 subcomplex. Contacts the 5S and 23S rRNAs.

This is one of the proteins that bind and probably mediate the attachment of the 5S RNA into the large ribosomal subunit, where it forms part of the central protuberance. The sequence is that of Large ribosomal subunit protein uL18 from Campylobacter hominis (strain ATCC BAA-381 / DSM 21671 / CCUG 45161 / LMG 19568 / NCTC 13146 / CH001A).